We begin with the raw amino-acid sequence, 695 residues long: Elongation factor G (695 aa).

Residues 12–286 (DKIRNIGIMA…AVIDYLPSPL (275 aa)) enclose the tr-type G domain. Residues 21–28 (AHIDAGKT), 85–89 (DTPGH), and 139–142 (NKMD) contribute to the GTP site.

The protein belongs to the TRAFAC class translation factor GTPase superfamily. Classic translation factor GTPase family. EF-G/EF-2 subfamily.

It is found in the cytoplasm. Catalyzes the GTP-dependent ribosomal translocation step during translation elongation. During this step, the ribosome changes from the pre-translocational (PRE) to the post-translocational (POST) state as the newly formed A-site-bound peptidyl-tRNA and P-site-bound deacylated tRNA move to the P and E sites, respectively. Catalyzes the coordinated movement of the two tRNA molecules, the mRNA and conformational changes in the ribosome. The polypeptide is Elongation factor G (Thermotoga neapolitana (strain ATCC 49049 / DSM 4359 / NBRC 107923 / NS-E)).